A 572-amino-acid chain; its full sequence is DnaJ protein ERDJ3A (572 aa).

Positions 1 to 23 (MVRTRLAISVVLVSTLLLLNVKA) are cleaved as a signal peptide. The region spanning 27 to 91 (DPYKVLGVSK…EKRKNYDLYG (65 aa)) is the J domain. Residues 394–423 (ITVKNLKSAVQELGKLLEGLEKKNKKVSSK) adopt a coiled-coil conformation. A disordered region spans residues 419-439 (KVSSKSQAGQAPNESSEKIPL). Residues 422–432 (SKSQAGQAPNE) are compositionally biased toward polar residues. N431 carries N-linked (GlcNAc...) asparagine glycosylation.

In terms of assembly, interacts with BIP1 and BIP3. The interaction with BIP1 and BIP3 activates the ATPase enzyme activities of BIP1 and BIP3. In terms of processing, not N-glycosylated. In terms of tissue distribution, expressed in roots, leaves, stems, flowers, mature pollen grains and growing pollen tubes.

The protein resides in the endoplasmic reticulum lumen. Functionally, regulates protein folding in the endoplasmic reticulum (ER) lumen. Functions probably as a co-molecular chaperone that is required for normal growth of pollen tubes under high-temperature stress. This is DnaJ protein ERDJ3A (ERDJ3A) from Arabidopsis thaliana (Mouse-ear cress).